Here is a 530-residue protein sequence, read N- to C-terminus: Autoinducer-2 kinase (530 aa).

It belongs to the FGGY kinase family.

Its subcellular location is the cytoplasm. The catalysed reaction is (S)-4,5-dihydroxypentane-2,3-dione + ATP = (2S)-2-hydroxy-3,4-dioxopentyl phosphate + ADP + H(+). Functionally, catalyzes the phosphorylation of autoinducer-2 (AI-2) to phospho-AI-2, which subsequently inactivates the transcriptional regulator LsrR and leads to the transcription of the lsr operon. Phosphorylates the ring-open form of (S)-4,5-dihydroxypentane-2,3-dione (DPD), which is the precursor to all AI-2 signaling molecules, at the C5 position. The sequence is that of Autoinducer-2 kinase from Yersinia pseudotuberculosis serotype O:3 (strain YPIII).